Here is a 494-residue protein sequence, read N- to C-terminus: Glutamyl-tRNA(Gln) amidotransferase subunit A (494 aa).

Catalysis depends on charge relay system residues lysine 80 and serine 160. Residues 140-168 (GNVISPWRRPGDTAPLAPGGSSGGSSSAV) form a disordered region. The active-site Acyl-ester intermediate is the serine 184.

The protein belongs to the amidase family. GatA subfamily. As to quaternary structure, heterotrimer of A, B and C subunits.

It catalyses the reaction L-glutamyl-tRNA(Gln) + L-glutamine + ATP + H2O = L-glutaminyl-tRNA(Gln) + L-glutamate + ADP + phosphate + H(+). In terms of biological role, allows the formation of correctly charged Gln-tRNA(Gln) through the transamidation of misacylated Glu-tRNA(Gln) in organisms which lack glutaminyl-tRNA synthetase. The reaction takes place in the presence of glutamine and ATP through an activated gamma-phospho-Glu-tRNA(Gln). This is Glutamyl-tRNA(Gln) amidotransferase subunit A from Novosphingobium aromaticivorans (strain ATCC 700278 / DSM 12444 / CCUG 56034 / CIP 105152 / NBRC 16084 / F199).